The sequence spans 888 residues: Microtubule-associated protein 10 (888 aa).

Disordered regions lie at residues 398–454, 508–602, 620–642, 654–683, and 699–836; these read EHKG…VTKG, SLAA…TSLR, NILR…DPAV, QVKA…ELQC, and TENN…YEPS. Residues 524 to 541 are compositionally biased toward polar residues; it reads LTDSNGKVSSWAVQSQLP. A compositionally biased stretch (basic and acidic residues) spans 572–589; that stretch reads ESSRTREAKQSHAMKKET. Positions 590–600 are enriched in polar residues; that stretch reads VGQSENKTVTS. Polar residues-rich tracts occupy residues 661–683, 699–714, 722–745, 772–786, and 825–836; these read ADTN…ELQC, TENN…SSTG, SWAS…SSVF, EASS…SQWT, and ARTSQVSSYEPS.

In terms of assembly, interacts (via middle region) with microtubules.

Its subcellular location is the cytoplasm. It is found in the cytoskeleton. It localises to the spindle pole. The protein resides in the microtubule organizing center. The protein localises to the centrosome. Its subcellular location is the midbody. In terms of biological role, microtubule-associated protein (MAP) that plays a role in the regulation of cell division; promotes microtubule stability and participates in the organization of the spindle midzone and normal progress of cytokinesis. This chain is Microtubule-associated protein 10 (Map10), found in Rattus norvegicus (Rat).